The chain runs to 416 residues: Caspase-9 (416 aa).

Residues 1-92 (MDEADRRLLR…DMLASFLRTN (92 aa)) form the CARD domain. Thr125 carries the post-translational modification Phosphothreonine; by MAPK1. Tyr153 carries the post-translational modification Phosphotyrosine; by ABL1. Catalysis depends on residues His237 and Cys287. A disordered region spans residues 294–320 (HGFEVASTSPEDESPGSNPEPDATPFQ). 3 positions are modified to phosphoserine: Ser302, Ser307, and Ser310. Residues 316-330 (ATPFQEGLRTFDQLD) constitute a propeptide that is removed on maturation. Arg355 is subject to (Microbial infection) ADP-riboxanated arginine.

The protein belongs to the peptidase C14A family. Heterotetramer that consists of two anti-parallel arranged heterodimers, each one formed by a 35 kDa (p35) and a 10 kDa (p10) subunit. Caspase-9 and APAF1 bind to each other via their respective NH2-terminal CED-3 homologous domains in the presence of cytochrome C and ATP. Interacts (inactive form) with EFHD2. Interacts with HAX1. Interacts with BIRC2/c-IAP1, XIAP/BIRC4, BIRC5/survivin, BIRC6/bruce and BIRC7/livin. Interacts with ABL1 (via SH3 domain); the interaction is direct and increases in the response of cells to genotoxic stress and ABL1/c-Abl activation. Interacts with BCL2L10. Interacts with NleF from pathogenic E.coli. Cleavages at Asp-315 by granzyme B and at Asp-330 by caspase-3 generate the two active subunits. Caspase-8 and -10 can also be involved in these processing events. Post-translationally, phosphorylated at Thr-125 by MAPK1/ERK2. Phosphorylation at Thr-125 is sufficient to block caspase-9 processing and subsequent caspase-3 activation. Phosphorylation on Tyr-153 by ABL1/c-Abl; occurs in the response of cells to DNA damage. In terms of processing, (Microbial infection) ADP-riboxanation by C.violaceum CopC blocks CASP9 processing, preventing CASP9 activation and ability to mediate intrinsic apoptosis. Ubiquitinated by BIRC6; this activity is inhibited by DIABLO/SMAC. Ubiquitous, with highest expression in the heart, moderate expression in liver, skeletal muscle, and pancreas. Low levels in all other tissues. Within the heart, specifically expressed in myocytes.

The catalysed reaction is Strict requirement for an Asp residue at position P1 and with a marked preference for His at position P2. It has a preferred cleavage sequence of Leu-Gly-His-Asp-|-Xaa.. Inhibited by the effector protein NleF that is produced by pathogenic E.coli; this inhibits apoptosis. Inhibited by BIRC6; following inhibition of BIRC6-caspase binding by DIABLO/SMAC, BIRC6 is subjected to caspase cleavage, leading to an increase in active caspases. Functionally, involved in the activation cascade of caspases responsible for apoptosis execution. Binding of caspase-9 to Apaf-1 leads to activation of the protease which then cleaves and activates effector caspases caspase-3 (CASP3) or caspase-7 (CASP7). Promotes DNA damage-induced apoptosis in a ABL1/c-Abl-dependent manner. Proteolytically cleaves poly(ADP-ribose) polymerase (PARP). Cleaves BIRC6 following inhibition of BIRC6-caspase binding by DIABLO/SMAC. Its function is as follows. Lacks activity is an dominant-negative inhibitor of caspase-9. The polypeptide is Caspase-9 (CASP9) (Homo sapiens (Human)).